We begin with the raw amino-acid sequence, 66 residues long: Large ribosomal subunit protein bL35 (66 aa).

2 stretches are compositionally biased toward basic residues: residues 1-15 (MSKLKTRSSAAKRFK) and 22-43 (ILHKKAGKRHNLSKKSESRKRR). Positions 1–43 (MSKLKTRSSAAKRFKVTATGKILHKKAGKRHNLSKKSESRKRR) are disordered.

Belongs to the bacterial ribosomal protein bL35 family.

The polypeptide is Large ribosomal subunit protein bL35 (Dictyoglomus turgidum (strain DSM 6724 / Z-1310)).